Reading from the N-terminus, the 4911-residue chain is Histone-lysine N-methyltransferase 2C (4911 aa).

The disordered stretch occupies residues 1–101 (MSSEEDKSVE…EDAEAEVDNS (101 aa)). A compositionally biased stretch (pro residues) spans 12–28 (PQPPPPPPEEPGAPAPS). A phosphoserine mark is found at Ser-28 and Ser-46. A DNA-binding region (a.T hook) is located at residues 34–46 (KRPRGRPRKDGAS). The segment covering 50–59 (RARKKPRSRG) has biased composition (basic residues). A compositionally biased stretch (acidic residues) spans 64 to 81 (EDEDSMDGLETTETETIV). Ser-89 is subject to Phosphoserine. Positions 92–112 (EDAEAEVDNSKQLIPTLQRSV) form a coiled coil. Ser-113 carries the phosphoserine modification. The interval 164-203 (RNQPSNKKDIDDNSNGTYEKMQNSAPRKQRGQRKERSPQQ) is disordered. Over residues 176-189 (NSNGTYEKMQNSAP) the composition is skewed to polar residues. Position 200 is a phosphoserine (Ser-200). The C2HC pre-PHD-type 1; degenerate zinc finger occupies 227–262 (ELSLVGLPDAIDIQALFDSTGTCWAHHRCVEWSLGV). PHD-type zinc fingers lie at residues 283-331 (ERCA…PEHI), 341-391 (DANC…CKVC), 388-438 (CKVC…CRIC), and 464-520 (DNLC…CKHL). The segment at 344-389 (CAVCDSPGDLLDQFFCTTCGQHYHGMCLDIAVTPLKRAGWQCPECK) adopts an RING-type zinc-finger fold. The DHHC domain maps to 436–489 (RICIECGTRSSSQWHHNCLICDNCYQQQDNLCPFCGKCYHPELQKDMLHCNMCK). The stretch at 644–672 (EDKMEVTENIEVVTHQITVQQEQLQLLEE) forms a coiled coil. The span at 721–730 (QGEKEQKENS) shows a compositional bias: basic and acidic residues. A disordered region spans residues 721 to 742 (QGEKEQKENSELSTGLMDSEMT). Lys-758 is subject to N6-acetyllysine. The span at 763 to 791 (SSETESSFSSSADISKADVSSSPTPSSDL) shows a compositional bias: low complexity. 3 disordered regions span residues 763-798 (SSET…DMLH), 828-864 (PAIT…DISE), and 885-912 (GRGS…RSKL). A compositionally biased stretch (basic residues) spans 830 to 842 (ITKRKFSPGRPRS). Over residues 845-856 (GAWSTHNTVSPP) the composition is skewed to polar residues. Ser-854 bears the Phosphoserine mark. 3 PHD-type zinc fingers span residues 957 to 1010 (QDMC…CTVC), 1007 to 1057 (CTVC…CVWC), and 1084 to 1139 (LSSC…CRPY). The disordered stretch occupies residues 1215–1324 (AVLQTPPDIQ…LPCRDDGWSE (110 aa)). Residues 1224 to 1270 (QSEHSRDGEMDDSREGELMDCDGKSESSPEREAVDDETKGVEGTDGV) are compositionally biased toward basic and acidic residues. The residue at position 1301 (Ser-1301) is a Phosphoserine. The stretch at 1338 to 1366 (TESTEKIKKRYRKRKNKLEETFPAYLQEA) forms a coiled coil. Low complexity predominate over residues 1406-1416 (PSLDPLLSSSS). 2 disordered regions span residues 1406-1431 (PSLD…DDPL) and 1458-1485 (HSDI…PLSE). Positions 1467 to 1482 (DPSSLPQPNVNQSSRP) are enriched in polar residues. Lys-1508 is modified (N6-acetyllysine). 2 disordered regions span residues 1604–1630 (FNPM…DTMS) and 1709–2448 (VQMS…SPVA). 2 stretches are compositionally biased toward polar residues: residues 1610 to 1620 (DPNNSWTSSAP) and 1709 to 1727 (VQMS…SIDP). Over residues 1729–1753 (SRIDSELFKDPLKQRESEHEQEWKF) the composition is skewed to basic and acidic residues. A coiled-coil region spans residues 1754–1787 (RQQMRQKSKQQAKIEATQKLEQVKNEQQQQQQQQ). N6-acetyllysine is present on Lys-1772. A compositionally biased stretch (polar residues) spans 1788-1823 (FGSQHLLVQSGSDTPSSGIQSPLTPQPGNGNMSPAQ). A compositionally biased stretch (pro residues) spans 1851-1860 (QAPPPPPAPS). Over residues 1861–1875 (RIPIQDSLSQAQTSQ) the composition is skewed to low complexity. Residues 1927-1945 (TPLSSVSRPLQMNETTANR) show a composition bias toward polar residues. Residue Ser-1987 is modified to Phosphoserine. Lys-2009 carries the post-translational modification N6-acetyllysine. Composition is skewed to polar residues over residues 2054-2065 (QDPYGSVSQASR), 2085-2094 (FSHNQSNDPY), 2115-2131 (AFSQ…QDPY), and 2144-2159 (SYSQ…TDPY). The segment covering 2173–2187 (PYSQQPQTPRPSTQT) has biased composition (low complexity). Composition is skewed to polar residues over residues 2302-2319 (SPMT…SQTA), 2335-2353 (CASS…SGVS), and 2362-2375 (SGVT…NMAQ). Over residues 2377–2389 (DTEKLRQRQKLRE) the composition is skewed to basic and acidic residues. Low complexity predominate over residues 2390–2399 (IILQQQQQKK). 2 positions are modified to asymmetric dimethylarginine: Arg-2454 and Arg-2571. 4 disordered regions span residues 2589–2694 (RHGN…SDDP), 2793–2887 (EPKK…RETA), 2925–2954 (EKSD…VSSL), and 2989–3029 (VNPG…SGPQ). Polar residues-rich tracts occupy residues 2629–2645 (PPSQ…SSMV) and 2661–2682 (PLST…TQPS). The span at 2793–2811 (EPKKKEQENKTLVLSDKHS) shows a compositional bias: basic and acidic residues. N6-acetyllysine occurs at positions 2802 and 2809. Residues 2814–2832 (KKSTVTNEVKTEVLSPNSK) are compositionally biased toward polar residues. The residue at position 2828 (Ser-2828) is a Phosphoserine. Lys-2832 is modified (N6-acetyllysine). A compositionally biased stretch (basic and acidic residues) spans 2833–2849 (VESKCETEKNDENKDNV). The segment covering 2851 to 2860 (TPCSQASAHS) has biased composition (polar residues). The span at 2861-2884 (DLNDGEKTSLHPCDPDLFEKRTNR) shows a compositional bias: basic and acidic residues. Lys-2867 carries the N6-acetyllysine modification. The segment covering 3011-3029 (TQTGPQTSQSGTSSMSGPQ) has biased composition (low complexity). Coiled-coil stretches lie at residues 3054-3081 (LLQD…QRSE), 3173-3272 (NDSQ…QQQQ), and 3391-3433 (FSES…EMEQ). Residues 3205-3221 (HRKSKKALSAKQRTAKK) are compositionally biased toward basic residues. Disordered stretches follow at residues 3205-3241 (HRKS…TEQQ), 3353-3409 (PPIA…EQQE), 3527-3583 (PNFS…HSYP), 3596-3919 (IIPE…MANG), and 4024-4053 (VKEE…SRRN). 2 stretches are compositionally biased toward basic and acidic residues: residues 3222–3238 (AGRE…KHVT) and 3395–3409 (FQER…EQQE). Composition is skewed to polar residues over residues 3527-3549 (PNFS…QSPV), 3564-3583 (ANSS…HSYP), 3637-3658 (ISET…QADQ), and 3684-3701 (LPNS…TYAN). Over residues 3703-3725 (EVDKLSMETPAKTEEIKLEKAET) the composition is skewed to basic and acidic residues. Lys-3714 carries the post-translational modification N6-acetyllysine. Ser-3758 is subject to Phosphoserine. A compositionally biased stretch (basic and acidic residues) spans 3803–3812 (DCTKDNKLVE). Positions 3878-3892 (MYSSTDTFTHLKQQN) are enriched in polar residues. Positions 3897–3911 (PPTPPASLPPTPPPM) are enriched in pro residues. Ser-4034 carries the phosphoserine modification. An Asymmetric dimethylarginine modification is found at Arg-4139. Ser-4267 bears the Phosphoserine mark. A C2HC pre-PHD-type 2 zinc finger spans residues 4399–4439 (YRKCCFCHEEGDGLTDGPARLLNLDLDLWVHLNCALWSTEV). Residues 4460 to 4507 (MKCVFCHKTGATSGCHRFRCTNIYHFTCAIKAQCMFFKDKTMLCPMHK) form a PHD-type 8 zinc finger. The FYR N-terminal domain maps to 4545-4605 (DHTFRVGSLI…CRYLCSIEEK (61 aa)). One can recognise an FYR C-terminal domain in the interval 4606–4691 (DGRPVFVIRI…EACENYTFRY (86 aa)). A WDR5 interaction motif (WIN) motif is present at residues 4707–4712 (GCARSE). The SET domain occupies 4771-4887 (SNVYLARSRI…KGEELCYDYK (117 aa)). S-adenosyl-L-methionine-binding positions include Tyr-4825 and 4848-4849 (NH). Residues Cys-4851, Cys-4899, Cys-4901, and Cys-4906 each coordinate Zn(2+). The 17-residue stretch at 4895 to 4911 (HKIPCHCGAVNCRKWMN) folds into the Post-SET domain.

This sequence belongs to the class V-like SAM-binding methyltransferase superfamily. Histone-lysine methyltransferase family. TRX/MLL subfamily. As to quaternary structure, component of the MLL3 complex (also named ASCOM complex), at least composed of catalytic subunit KMT2C/MLL3, ASH2L, RBBP5, WDR5, NCOA6, DPY30, KDM6A, PAXIP1/PTIP, PAGR1 and alpha- and beta-tubulin. Forms a core complex with the evolutionary conserved subcomplex WRAD composed of WDR5, RBBP5, ASH2L/ASH2 and DPY30 subunits; WRAD differentially stimulates the methyltransferase activity. Interacts (via WIN motif) with WDR5. As to expression, highly expressed in testis and ovary, followed by brain and liver. Also expressed in placenta, peripherical blood, fetal thymus, heart, lung and kidney. Within brain, expression was highest in hippocampus, caudate nucleus, and substantia nigra. Not detected in skeletal muscle and fetal liver.

Its subcellular location is the nucleus. The catalysed reaction is L-lysyl(4)-[histone H3] + S-adenosyl-L-methionine = N(6)-methyl-L-lysyl(4)-[histone H3] + S-adenosyl-L-homocysteine + H(+). Functionally, histone methyltransferase that catalyzes methyl group transfer from S-adenosyl-L-methionine to the epsilon-amino group of 'Lys-4' of histone H3 (H3K4). Part of chromatin remodeling machinery predominantly forms H3K4me1 methylation marks at active chromatin sites where transcription and DNA repair take place. Likely plays a redundant role with KMT2D in enriching H3K4me1 mark on primed and active enhancer elements. The chain is Histone-lysine N-methyltransferase 2C (KMT2C) from Homo sapiens (Human).